We begin with the raw amino-acid sequence, 334 residues long: Heat-inducible transcription repressor HrcA (334 aa).

The protein belongs to the HrcA family.

Negative regulator of class I heat shock genes (grpE-dnaK-dnaJ and groELS operons). Prevents heat-shock induction of these operons. This chain is Heat-inducible transcription repressor HrcA, found in Verminephrobacter eiseniae (strain EF01-2).